The sequence spans 181 residues: uncharacterized protein (181 aa).

Residues 1–159 (MTVHHFTFHI…KACWMMQSLT (159 aa)) form the N-acetyltransferase domain.

Belongs to the acetyltransferase family.

This is an uncharacterized protein from Escherichia coli (strain K12).